The chain runs to 364 residues: Adenine deaminase (364 aa).

His25, His27, and His221 together coordinate Zn(2+). Glu224 (proton donor) is an active-site residue. Asp301 is a Zn(2+) binding site. Asp302 provides a ligand contact to substrate.

It belongs to the metallo-dependent hydrolases superfamily. Adenosine and AMP deaminases family. Adenine deaminase type 2 subfamily. Zn(2+) is required as a cofactor.

It is found in the cytoplasm. It localises to the nucleus. It carries out the reaction adenine + H2O + H(+) = hypoxanthine + NH4(+). Catalyzes the hydrolytic deamination of adenine to hypoxanthine. Plays an important role in the purine salvage pathway and in nitrogen catabolism. Has no activity with adenosine as a substrate. This chain is Adenine deaminase (aah1), found in Emericella nidulans (strain FGSC A4 / ATCC 38163 / CBS 112.46 / NRRL 194 / M139) (Aspergillus nidulans).